An 861-amino-acid chain; its full sequence is MNPIDTDDLEKHTPMMRQYLTMKAEHHDMLLFYRMGDFYELFYDDAKRASELLGISLTARGKSGGDPIPMAGIPYHAVEGYLAKLVQIGQSVAICEQIGDPATSKGPVERKVVRIVTPGTLTDEALLQERQDNLLAAVYQGKVGFGYATLDVSSGRFVIAELETKESLEAELQRTNPVEILYSEDFGAMELLHHFKGKRRRPEWEFDYDTSIKLLLAQFGTKDLHGFGITDARLSLQAAGCLMQYVKDTQRTALPHINAITRFNQTDTIVLDAATRRNLELTQNLSGGRDNTLAAVLDNTATAMGSRMLQRWIHQPLRDHAQIFARQTAVNELLETTAHESLHDQLKALGDIERIMARLALRTARPRDFARLRQALNLLPQLQQSLAQLSAPHTVKLGQLLGEFPEEQQLLERAIVDNPPMLIRDGGVIREGYNAELDEWRGLSEGATDYLVQLEAREKERTGIATLKVGYNRVHGYYIEVSRLQSQQVPLNYQRRQTLKNMERYITPELKEYEEKVLSSQGKALALEKQLWDELFDLILPKLHELQAFARAAAELDVLSNFAERAETLGYTCPELSSEIGVKIEAGRHPVVERVSQTPFIANPVTLHNQRRMLIVTGPNMGGKSTYMRQVALITLMAHIGCFVPADRAIIGPIDRIFTRIGASDDLASGRSTFMVEMTETANILHNATAQSLVLMDEIGRGTSTYDGLSLAWSAAEYLAQQVGAMTLFATHYFELTQLPELMAGVYNVHLDAIEHEDTIAFMHAVQEGAASKSYGLQVAALAGVPARVIKAAKHKLHQLESRDHQVEGANVNGTRAPIQTLLALPEPVENPAVSKLKDINPDNLTPKQALDLLYELKRLS.

618-625 (GPNMGGKS) contributes to the ATP binding site.

Belongs to the DNA mismatch repair MutS family.

In terms of biological role, this protein is involved in the repair of mismatches in DNA. It is possible that it carries out the mismatch recognition step. This protein has a weak ATPase activity. The chain is DNA mismatch repair protein MutS from Shewanella sp. (strain ANA-3).